Reading from the N-terminus, the 421-residue chain is 5-hydroxytryptamine receptor 2 (421 aa).

Topologically, residues Met-1–Thr-21 are extracellular. Asn-11 is a glycosylation site (N-linked (GlcNAc...) asparagine). Residues Val-22–Val-42 traverse the membrane as a helical segment. The Cytoplasmic portion of the chain corresponds to Cys-43 to Phe-59. A helical transmembrane segment spans residues Phe-60–Ala-79. The Extracellular segment spans residues Leu-80–Cys-95. Residues Cys-95 and Cys-210 are joined by a disulfide bond. A helical transmembrane segment spans residues Phe-96–Tyr-118. Topologically, residues Asn-119 to Arg-138 are cytoplasmic. Residues Ala-139 to Leu-160 form a helical membrane-spanning segment. Over Glu-161 to Asp-213 the chain is Extracellular. The helical transmembrane segment at Val-214–Met-234 threads the bilayer. The Cytoplasmic segment spans residues Leu-235 to Thr-274. Residues Ile-275–Ala-295 form a helical membrane-spanning segment. The Extracellular portion of the chain corresponds to Val-296 to Glu-304. Residues Cys-305–Gly-325 form a helical membrane-spanning segment. Topologically, residues Thr-326–Ser-421 are cytoplasmic.

Belongs to the G-protein coupled receptor 1 family. As to expression, central nervous system.

It localises to the cell membrane. In terms of biological role, this is one of the several different receptors for 5-hydroxytryptamine (serotonin). 5-HT plays important roles in various behavioral and physiological processes in aplysia. These include feeding, locomotion, circadian rhythm, learning and memory, synaptic plasticity, and synaptic growth. This receptor is mediated by G proteins that stimulate phospholipase C. In Aplysia californica (California sea hare), this protein is 5-hydroxytryptamine receptor 2 (5HTB2).